The sequence spans 593 residues: MTISNKSWRSYFPHLRKLPEDDQYLYSDDTNSSIIAEEELHHSVDKSSKTDVTAETTAVEPHPHNLRHDLPYEVRDEAGRKWWKYFDEFEYRVNKEYKKSRKWYEFLYPNHTTQTKAERRLLYKLDIIIALYFFMLCWSKSVDLNNYTNAYVSNMKEDLNMKGNDYVYTSTIANVGAIVFQLPFMYLLPRFPSHIILPVMDLGWTWFTFACYRANSLAELRAYRFILSAFGAAYYPVSQYILGCWYAPDEINSRVCLFFCGQQLGSVTSGLLQSRIFKSLNGVHGLAGWRWMFLIDAIAISLPTAIIGFFVIPGVPSKCYSLFLTDEEIRIARARNKRNQIKDGVDKSKLAPLWSRKLWKKVFCTPAFWVLVVFDTCSWNNMTAYSGSYTLWLKSNTKYSIAQVNNLSVIPACLGFAYVIFCAFGADLFRCKWIFMVFAAIMNTVSCALLIKWDIPSKAKWYAFFTTYFSVAASPCLWSFINDFLRFDPQVKAITWIAIYSFSQSTYAWIPTLAWPTVESPRFKTGYTVSLIFGAIYGLWTFVVLFFYKRNEKKHALGNGIILYDSNKGEELPEFVKKNMEERDGYYYLKRSS.

The Extracellular portion of the chain corresponds to 1-121 (MTISNKSWRS…TTQTKAERRL (121 aa)). Residues Ser-32, Ser-33, and Ser-43 each carry the phosphoserine modification. A helical transmembrane segment spans residues 122–142 (LYKLDIIIALYFFMLCWSKSV). At 143 to 166 (DLNNYTNAYVSNMKEDLNMKGNDY) the chain is on the cytoplasmic side. The helical transmembrane segment at 167–187 (VYTSTIANVGAIVFQLPFMYL) threads the bilayer. Residues 188-190 (LPR) lie on the Extracellular side of the membrane. A helical membrane pass occupies residues 191-211 (FPSHIILPVMDLGWTWFTFAC). At 212–224 (YRANSLAELRAYR) the chain is on the cytoplasmic side. Residues 225-245 (FILSAFGAAYYPVSQYILGCW) form a helical membrane-spanning segment. Over 246-291 (YAPDEINSRVCLFFCGQQLGSVTSGLLQSRIFKSLNGVHGLAGWRW) the chain is Extracellular. Residues 292-312 (MFLIDAIAISLPTAIIGFFVI) traverse the membrane as a helical segment. Topologically, residues 313-361 (PGVPSKCYSLFLTDEEIRIARARNKRNQIKDGVDKSKLAPLWSRKLWKK) are cytoplasmic. Residues 362–382 (VFCTPAFWVLVVFDTCSWNNM) traverse the membrane as a helical segment. The Extracellular segment spans residues 383–408 (TAYSGSYTLWLKSNTKYSIAQVNNLS). Residues 409–429 (VIPACLGFAYVIFCAFGADLF) traverse the membrane as a helical segment. The Cytoplasmic portion of the chain corresponds to 430–432 (RCK). A helical membrane pass occupies residues 433 to 453 (WIFMVFAAIMNTVSCALLIKW). At 454 to 460 (DIPSKAK) the chain is on the extracellular side. Residues 461–481 (WYAFFTTYFSVAASPCLWSFI) traverse the membrane as a helical segment. The Cytoplasmic segment spans residues 482–492 (NDFLRFDPQVK). The chain crosses the membrane as a helical span at residues 493–513 (AITWIAIYSFSQSTYAWIPTL). The Extracellular segment spans residues 514-526 (AWPTVESPRFKTG). The helical transmembrane segment at 527-547 (YTVSLIFGAIYGLWTFVVLFF) threads the bilayer. Residues 548-593 (YKRNEKKHALGNGIILYDSNKGEELPEFVKKNMEERDGYYYLKRSS) lie on the Cytoplasmic side of the membrane.

It belongs to the major facilitator superfamily. Allantoate permease family.

The protein resides in the cell membrane. Functionally, involved in uptake of biotin with the concomitant entry of protons. The protein is Vitamin H transporter (VHT1) of Saccharomyces cerevisiae (strain ATCC 204508 / S288c) (Baker's yeast).